A 404-amino-acid polypeptide reads, in one-letter code: Sorting nexin-5 (404 aa).

At Ala2 the chain carries N-acetylalanine. A PX domain is found at 25–172; it reads LNVDPSLQID…HVFLEYDQDL (148 aa). Residues 40 to 46, 99 to 105, and 113 to 116 each bind a 1,2-diacyl-sn-glycero-3-phospho-(1D-myo-inositol-4,5-bisphosphate); these read SERDKVK, FDGPREK, and EGSM. Residues 169-261 form an interaction with DOCK1 region; that stretch reads DQDLSVRRKN…HSLALEEPTV (93 aa). The tract at residues 183–200 is membrane-binding amphipathic helix; the sequence is FGGFFKSVVKSADEVLFS. Ser193 is modified (phosphoserine). In terms of domain architecture, BAR spans 202–404; sequence VKEVDDFFEQ…QSCIDLFKNN (203 aa). Residue Lys275 is modified to N6-acetyllysine.

It belongs to the sorting nexin family. As to quaternary structure, forms heterodimers with BAR domain-containing sorting nexins SNX1 and SNX2; does not homodimerize. The heterodimers are proposed to self-assemble into helical arrays on the membrane to stabilize and expand local membrane curvature underlying endosomal tubule formation. Thought to be a component of the originally described retromer complex (also called SNX-BAR retromer) which is a pentamer containing the heterotrimeric retromer cargo-selective complex (CSC), also described as vacuolar protein sorting subcomplex (VPS), and a heterodimeric membrane-deforming subcomplex formed between SNX1 or SNX2 and SNX5 or SNX6 (also called SNX-BAR subcomplex); the respective CSC and SNX-BAR subcomplexes associate with low affinity. Interacts with SNX1, SNX2, VPS26A, VPS29, VPS35, DCTN1, DOCK1, MIB1, PIP5K1C. Interacts with HGS; increased by PIP5K1C kinase activity and by PtdIns(3P) and/or PtdIns(3,4)P2. Detected in macrophages (at protein level).

It is found in the endosome. Its subcellular location is the early endosome. The protein resides in the early endosome membrane. The protein localises to the cell membrane. It localises to the cytoplasmic vesicle membrane. It is found in the cytoplasm. Its subcellular location is the cell projection. The protein resides in the phagocytic cup. The protein localises to the ruffle. In terms of biological role, involved in several stages of intracellular trafficking. Interacts with membranes containing phosphatidylinositol lipids. Acts in part as component of the retromer membrane-deforming SNX-BAR subcomplex. The SNX-BAR retromer mediates retrograde transport of cargo proteins from endosomes to the trans-Golgi network (TGN) and is involved in endosome-to-plasma membrane transport for cargo protein recycling. The SNX-BAR subcomplex functions to deform the donor membrane into a tubular profile called endosome-to-TGN transport carrier (ETC). Does not have in vitro vesicle-to-membrane remodeling activity. Involved in retrograde transport of lysosomal enzyme receptor IGF2R. May function as link between endosomal transport vesicles and dynactin. Plays a role in the internalization of EGFR after EGF stimulation. Involved in EGFR endosomal sorting and degradation; the function involves PIP5K1C and is retromer-independent. Together with PIP5K1C facilitates HGS interaction with ubiquitinated EGFR, which initiates EGFR sorting to intraluminal vesicles (ILVs) of the multivesicular body for subsequent lysosomal degradation. Involved in E-cadherin sorting and degradation; inhibits PIP5K1C-mediated E-cadherin degradation. Plays a role in macropinocytosis. The protein is Sorting nexin-5 (Snx5) of Mus musculus (Mouse).